A 213-amino-acid chain; its full sequence is Large ribosomal subunit protein uL1 (213 aa).

It belongs to the universal ribosomal protein uL1 family. Part of the 50S ribosomal subunit.

Functionally, binds directly to 23S rRNA. Probably involved in E site tRNA release. Protein L1 is also a translational repressor protein, it controls the translation of its operon by binding to its mRNA. The chain is Large ribosomal subunit protein uL1 from Methanococcoides burtonii (strain DSM 6242 / NBRC 107633 / OCM 468 / ACE-M).